A 274-amino-acid chain; its full sequence is Dermonecrotic toxin SdSicTox-betaIIB1bvii (274 aa).

The active site involves histidine 5. Positions 25 and 27 each coordinate Mg(2+). The Nucleophile role is filled by histidine 41. Intrachain disulfides connect cysteine 45–cysteine 51 and cysteine 47–cysteine 190. Aspartate 85 is a Mg(2+) binding site.

This sequence belongs to the arthropod phospholipase D family. Class II subfamily. Mg(2+) serves as cofactor. In terms of tissue distribution, expressed by the venom gland.

The protein resides in the secreted. It catalyses the reaction an N-(acyl)-sphingosylphosphocholine = an N-(acyl)-sphingosyl-1,3-cyclic phosphate + choline. The enzyme catalyses an N-(acyl)-sphingosylphosphoethanolamine = an N-(acyl)-sphingosyl-1,3-cyclic phosphate + ethanolamine. It carries out the reaction a 1-acyl-sn-glycero-3-phosphocholine = a 1-acyl-sn-glycero-2,3-cyclic phosphate + choline. The catalysed reaction is a 1-acyl-sn-glycero-3-phosphoethanolamine = a 1-acyl-sn-glycero-2,3-cyclic phosphate + ethanolamine. Functionally, dermonecrotic toxins cleave the phosphodiester linkage between the phosphate and headgroup of certain phospholipids (sphingolipid and lysolipid substrates), forming an alcohol (often choline) and a cyclic phosphate. This toxin acts on sphingomyelin (SM). It may also act on ceramide phosphoethanolamine (CPE), lysophosphatidylcholine (LPC) and lysophosphatidylethanolamine (LPE), but not on lysophosphatidylserine (LPS), and lysophosphatidylglycerol (LPG). It acts by transphosphatidylation, releasing exclusively cyclic phosphate products as second products. Induces dermonecrosis, hemolysis, increased vascular permeability, edema, inflammatory response, and platelet aggregation. The sequence is that of Dermonecrotic toxin SdSicTox-betaIIB1bvii from Sicarius cf. damarensis (strain GJB-2008) (Six-eyed sand spider).